Here is a 208-residue protein sequence, read N- to C-terminus: MKVVEVKHPLIKHKIGLMREGDISTKRFRELATEVGSLLTYEATSDFETEKVTINGWNGPVEVDQIKGKKVTVVPILRAGLGMMDGVLEHIPSARISVVGIYRDEETLEPVPYFNKLASNIDERIALVVDPMLATGGSMIATLDLLKEKGCKNFKILVLVAAPEGIAALEKAHPDVELYTAAIDEKLNDKGYIIPGLGDAGDKIFGTK.

5-phospho-alpha-D-ribose 1-diphosphate-binding positions include Arg78, Arg103, and 130-138; that span reads DPMLATGGS. Residues Ile193 and 198-200 contribute to the uracil site; that span reads GDA. 5-phospho-alpha-D-ribose 1-diphosphate is bound at residue Asp199.

The protein belongs to the UPRTase family. It depends on Mg(2+) as a cofactor.

It carries out the reaction UMP + diphosphate = 5-phospho-alpha-D-ribose 1-diphosphate + uracil. It participates in pyrimidine metabolism; UMP biosynthesis via salvage pathway; UMP from uracil: step 1/1. Its activity is regulated as follows. Allosterically activated by GTP. Functionally, catalyzes the conversion of uracil and 5-phospho-alpha-D-ribose 1-diphosphate (PRPP) to UMP and diphosphate. The sequence is that of Uracil phosphoribosyltransferase from Aliivibrio salmonicida (strain LFI1238) (Vibrio salmonicida (strain LFI1238)).